Reading from the N-terminus, the 200-residue chain is Pyridoxal 5'-phosphate synthase subunit PdxT (200 aa).

Residue 52 to 54 participates in L-glutamine binding; sequence GES. Catalysis depends on cysteine 84, which acts as the Nucleophile. L-glutamine is bound by residues arginine 116 and 145–146; that span reads IR. Catalysis depends on charge relay system residues histidine 181 and glutamate 183.

Belongs to the glutaminase PdxT/SNO family. As to quaternary structure, in the presence of PdxS, forms a dodecamer of heterodimers. Only shows activity in the heterodimer.

It catalyses the reaction aldehydo-D-ribose 5-phosphate + D-glyceraldehyde 3-phosphate + L-glutamine = pyridoxal 5'-phosphate + L-glutamate + phosphate + 3 H2O + H(+). The catalysed reaction is L-glutamine + H2O = L-glutamate + NH4(+). The protein operates within cofactor biosynthesis; pyridoxal 5'-phosphate biosynthesis. Catalyzes the hydrolysis of glutamine to glutamate and ammonia as part of the biosynthesis of pyridoxal 5'-phosphate. The resulting ammonia molecule is channeled to the active site of PdxS. This is Pyridoxal 5'-phosphate synthase subunit PdxT from Sulfurisphaera tokodaii (strain DSM 16993 / JCM 10545 / NBRC 100140 / 7) (Sulfolobus tokodaii).